Here is a 199-residue protein sequence, read N- to C-terminus: uncharacterized protein (199 aa).

The Nudix hydrolase domain maps to 38–169 (NRRAAVLIPI…SLDIHREGIN (132 aa)). Positions 76–98 (GKADPDDQSLISTALREAEEEVA) match the Nudix box motif. The Mg(2+) site is built by Glu-92 and Glu-96.

This sequence belongs to the Nudix hydrolase family. PCD1 subfamily. It depends on Mn(2+) as a cofactor. Requires Mg(2+) as cofactor.

In terms of biological role, probably mediates the hydrolysis of some nucleoside diphosphate derivatives. This is an uncharacterized protein from Yersinia pseudotuberculosis serotype I (strain IP32953).